The primary structure comprises 314 residues: uncharacterized protein (314 aa).

The region spanning 192–289 is the HTH araC/xylS-type domain; sequence TEVKLHIKDN…GSSPGLFRSL (98 aa). 2 DNA-binding regions (H-T-H motif) span residues 209–230 and 257–279; these read TDVA…AAEL and IKEI…SAKI.

This is an uncharacterized protein from Bacillus subtilis (strain 168).